The chain runs to 63 residues: MRCLPVFVILLLLIASAPSVDAQPKTKDDIPQASFLDNAKRYLQVLESKRNCCRRQICCGRTK.

A signal peptide spans 1–22 (MRCLPVFVILLLLIASAPSVDA). The propeptide occupies 23–48 (QPKTKDDIPQASFLDNAKRYLQVLES).

Belongs to the conotoxin T superfamily. Contains 2 disulfide bonds that can be either 'C1-C3, C2-C4' or 'C1-C4, C2-C3', since these disulfide connectivities have been observed for conotoxins with cysteine framework V (for examples, see AC P0DQQ7 and AC P81755). As to expression, expressed by the venom duct.

Its subcellular location is the secreted. In Conus textile (Cloth-of-gold cone), this protein is Conotoxin TeAr193.